The chain runs to 35 residues: Cytochrome b6-f complex subunit 5 (35 aa).

A helical transmembrane segment spans residues 5-25 (LLTGIVLGSIFITLLGLLAAA).

This sequence belongs to the PetG family. In terms of assembly, the 4 large subunits of the cytochrome b6-f complex are cytochrome b6, subunit IV (17 kDa polypeptide, PetD), cytochrome f and the Rieske protein, while the 4 small subunits are PetG, PetL, PetM and PetN. The complex functions as a dimer.

It is found in the plastid. The protein localises to the chloroplast thylakoid membrane. Its function is as follows. Component of the cytochrome b6-f complex, which mediates electron transfer between photosystem II (PSII) and photosystem I (PSI), cyclic electron flow around PSI, and state transitions. PetG is required for either the stability or assembly of the cytochrome b6-f complex. In Cyanidium caldarium (Red alga), this protein is Cytochrome b6-f complex subunit 5.